An 862-amino-acid chain; its full sequence is Short transient receptor potential channel 7 (862 aa).

Residues 1 to 21 (MLRNSTFKNMQRRHTTLREKG) form a disordered region. The Cytoplasmic segment spans residues 1–351 (MLRNSTFKNM…GLRQQSIAVK (351 aa)). Residues 10–21 (MQRRHTTLREKG) are compositionally biased toward basic residues. Thr-15 bears the Phosphothreonine; by PKG/PRKG1 mark. ANK repeat units lie at residues 42–71 (PEEE…TLNF), 77–106 (MGQN…LARV), 108–134 (DALL…FAQG), and 163–192 (HDIT…RIER). Residues 352 to 372 (FLAVFGVSIGLPFLAIAYWIA) traverse the membrane as a helical segment. At 373–383 (PCSKLGRTLRS) the chain is on the extracellular side. Residues 384–404 (PFMKFVAHAVSFTIFLGLLVV) traverse the membrane as a helical segment. Residues 405–465 (NASDRFEGVK…KEIWEEGPRE (61 aa)) are Cytoplasmic-facing. Residues 466–486 (YVLHLWNLLDFGMLSIFVASF) form a helical membrane-spanning segment. Residues 487–537 (TARFMAFLKATEAQLYVDQHVQDDTLHNVSLPPEVAYFTYARDKWWPSDPQ) lie on the Extracellular side of the membrane. The N-linked (GlcNAc...) asparagine glycan is linked to Asn-514. The chain crosses the membrane as a helical span at residues 538–558 (IISEGLYAIAVVLSFSRIAYI). Residues 559–581 (LPANESFGPLQISLGRTVKDIFK) lie on the Cytoplasmic side of the membrane. Residues 582-602 (FMVIFIMVFVAFMIGMFNLYS) traverse the membrane as a helical segment. At 603-651 (YYRGAKYNPAFTTVEESFKTLFWSIFGLSEVISVVLKYDHKFIENIGYV) the chain is on the extracellular side. A helical membrane pass occupies residues 652–672 (LYGVYNVTMVVVLLNMLIAMI). Over 673-862 (NNSYQEIEED…HLRVNKGKDI (190 aa)) the chain is Cytoplasmic.

The protein belongs to the transient receptor (TC 1.A.4) family. STrpC subfamily. TRPC7 sub-subfamily. Interacts with MX1 and RNF24. Interacts (via ANK-repeat domains) with PRKG1. Phosphorylation by PRKG1 at Thr-15 negatively regulates TRPC7 activity.

It is found in the cell membrane. Its subcellular location is the nucleus envelope. It catalyses the reaction Ca(2+)(in) = Ca(2+)(out). Functionally, forms a receptor-activated non-selective calcium permeant cation channel. Probably is operated by a phosphatidylinositol second messenger system activated by receptor tyrosine kinases or G-protein coupled receptors. Activated by diacylglycerol (DAG). May also be activated by intracellular calcium store depletion. This chain is Short transient receptor potential channel 7 (TRPC7), found in Homo sapiens (Human).